The primary structure comprises 557 residues: Laccase-11 (557 aa).

Positions 1–23 (MKMGFLFLFCYLLAFLGYSPVDA) are cleaved as a signal peptide. Plastocyanin-like domains are found at residues 31 to 147 (DVQV…PAPG) and 158 to 308 (ESNI…YKGV). Asn-36, Asn-69, and Asn-77 each carry an N-linked (GlcNAc...) asparagine glycan. Cu cation-binding residues include His-81 and His-83. Asn-115 carries an N-linked (GlcNAc...) asparagine glycan. The Cu cation site is built by His-126 and His-128. N-linked (GlcNAc...) asparagine glycosylation is found at Asn-240, Asn-296, Asn-323, Asn-371, Asn-381, Asn-398, Asn-416, and Asn-440. The 136-residue stretch at 406 to 541 (DFPDRPPKAF…KMAFVVENGE (136 aa)) folds into the Plastocyanin-like 3 domain. Cu cation is bound by residues His-458, His-461, His-463, His-520, Cys-521, His-522, and His-526.

This sequence belongs to the multicopper oxidase family. The cofactor is Cu cation. In terms of tissue distribution, ubiquitous and constitutive.

The protein resides in the secreted. Its subcellular location is the extracellular space. It is found in the apoplast. The catalysed reaction is 4 hydroquinone + O2 = 4 benzosemiquinone + 2 H2O. Functionally, lignin degradation and detoxification of lignin-derived products. The chain is Laccase-11 (LAC11) from Arabidopsis thaliana (Mouse-ear cress).